An 89-amino-acid polypeptide reads, in one-letter code: Small ribosomal subunit protein uS17 (89 aa).

The protein belongs to the universal ribosomal protein uS17 family. As to quaternary structure, part of the 30S ribosomal subunit.

In terms of biological role, one of the primary rRNA binding proteins, it binds specifically to the 5'-end of 16S ribosomal RNA. The protein is Small ribosomal subunit protein uS17 of Chlorobium chlorochromatii (strain CaD3).